Reading from the N-terminus, the 311-residue chain is Homeobox protein knotted-1-like 10 (311 aa).

2 disordered regions span residues 1-45 and 153-184; these read MEDL…PATT and LCGG…DAAD. Positions 12 to 22 are enriched in gly residues; the sequence is SRGGGGGGGGA. The region spanning 197-217 is the ELK domain; the sequence is ELKEMLLKKYSGCLSRLRSEF. Positions 218-281 form a DNA-binding region, homeobox; TALE-type; it reads LKKRKKGKLP…NQRKRHWKPS (64 aa).

It belongs to the TALE/KNOX homeobox family.

The protein resides in the nucleus. Probable transcription factor that may be involved in shoot formation during embryogenesis. The sequence is that of Homeobox protein knotted-1-like 10 (OSH71) from Oryza sativa subsp. indica (Rice).